The following is a 120-amino-acid chain: U-scoloptoxin(16)-Er2a (120 aa).

The first 26 residues, 1–26 (MNTVSVVQFLAVGCAVFVLYGRGVFA), serve as a signal peptide directing secretion.

It belongs to the scoloptoxin-16 family. In terms of processing, contains 4 disulfide bonds. Expressed by the venom gland.

Its subcellular location is the secreted. In Ethmostigmus rubripes (Giant centipede), this protein is U-scoloptoxin(16)-Er2a.